Consider the following 213-residue polypeptide: Putative manganese efflux pump MntP (213 aa).

The next 6 helical transmembrane spans lie at 3–23 (ILSI…VSVA), 36–56 (ALKV…IGWG), 67–87 (AFDH…MIFE), 130–150 (LAIA…FLGI), 152–172 (IVQT…LGVI), and 187–207 (IVGG…HTGI).

Belongs to the MntP (TC 9.B.29) family.

It is found in the cell membrane. Functionally, probably functions as a manganese efflux pump. The chain is Putative manganese efflux pump MntP from Clostridium perfringens (strain SM101 / Type A).